A 521-amino-acid polypeptide reads, in one-letter code: GMP synthase [glutamine-hydrolyzing] (521 aa).

The Glutamine amidotransferase type-1 domain occupies 5 to 197 (KILILDFGSQ…VLDICGAQPG (193 aa)). Catalysis depends on C81, which acts as the Nucleophile. Active-site residues include H171 and E173. Positions 198-390 (WTMPNYIEEA…LGLPREMVYR (193 aa)) constitute a GMPS ATP-PPase domain. 225-231 (SGGVDSS) contacts ATP.

In terms of assembly, homodimer.

It carries out the reaction XMP + L-glutamine + ATP + H2O = GMP + L-glutamate + AMP + diphosphate + 2 H(+). It functions in the pathway purine metabolism; GMP biosynthesis; GMP from XMP (L-Gln route): step 1/1. In terms of biological role, catalyzes the synthesis of GMP from XMP. This Neisseria gonorrhoeae (strain NCCP11945) protein is GMP synthase [glutamine-hydrolyzing].